The sequence spans 87 residues: MVNMKASMFLTFAGLVLLFVVCYASESEEKEFPKEMLSSIFAVDNDSKQEERDCVGYMRECKEKLCCSGYVCSSRWKWCVLPAPWRR.

Residues 1-24 (MVNMKASMFLTFAGLVLLFVVCYA) form the signal peptide. The propeptide occupies 25–52 (SESEEKEFPKEMLSSIFAVDNDSKQEER). 3 cysteine pairs are disulfide-bonded: Cys54–Cys67, Cys61–Cys72, and Cys66–Cys79.

The protein belongs to the neurotoxin 10 (Hwtx-1) family. 51 (Hntx-8) subfamily. Hntx-8 sub-subfamily. As to expression, expressed by the venom gland.

The protein localises to the secreted. In terms of biological role, ion channel inhibitor. The sequence is that of U3-theraphotoxin-Hhn1h from Cyriopagopus hainanus (Chinese bird spider).